The following is a 60-amino-acid chain: Conotoxin VnMRCL-012 (60 aa).

Positions 1 to 22 (MRCLPVFVILLLLIASAPGVDA) are cleaved as a signal peptide. Positions 23 to 50 (QPKTKYDVPLASRHDFAKKTPKRLSKPR) are excised as a propeptide.

The protein belongs to the conotoxin T superfamily. In terms of processing, contains 2 disulfide bonds that can be either 'C1-C3, C2-C4' or 'C1-C4, C2-C3', since these disulfide connectivities have been observed for conotoxins with cysteine framework V (for examples, see AC P0DQQ7 and AC P81755). Expressed by the venom duct.

It is found in the secreted. This chain is Conotoxin VnMRCL-012, found in Conus ventricosus (Mediterranean cone).